Reading from the N-terminus, the 541-residue chain is Reticulophagy regulator 2 (541 aa).

A run of 3 helical transmembrane segments spans residues 75-91, 99-115, and 199-219; these read LHSL…FWLL, FFLL…LDLW, and VPGI…PLVV. The disordered stretch occupies residues 249-282; it reads LHHKHDKRKRQGKNAPPAGDEPLAETESESEAEL. Residues 250-260 are compositionally biased toward basic residues; sequence HHKHDKRKRQG. Over residues 270 to 280 the composition is skewed to acidic residues; that stretch reads PLAETESESEA. T274 is subject to Phosphothreonine. A phosphoserine mark is found at S276, S278, S286, and S306. Residue T329 is modified to Phosphothreonine. Disordered regions lie at residues 331–389, 403–440, and 459–481; these read VSED…ADKE, THFN…APSS, and PSVL…EEEA. Residues S332, S339, and S342 each carry the phosphoserine modification. A compositionally biased stretch (low complexity) spans 459 to 475; sequence PSVLPSLPQDSPQALTA. Residues 485–490 carry the LIR motif motif; sequence EDFELL. Residues 496–541 form a disordered region; the sequence is EQLNAELGLGPEMPPKPPDVLPPPPLGPDSHSLVQSDQEAHAVVEP. Residues 507–522 show a composition bias toward pro residues; it reads EMPPKPPDVLPPPPLG.

Belongs to the RETREG family. In terms of assembly, interacts with ATG8 family modifier proteins MAP1LC3A, MAP1LC3B, GABARAP, GABARAPL1 and GABARAPL2. Interacts with CANX.

It is found in the endoplasmic reticulum membrane. Endoplasmic reticulum (ER)-anchored autophagy regulator which exists in an inactive state under basal conditions but is activated following cellular stress. When activated, induces ER fragmentation and mediates ER delivery into lysosomes through sequestration into autophagosomes via interaction with ATG8 family proteins. Required for collagen quality control in a LIR motif-independent manner. The chain is Reticulophagy regulator 2 (Retreg2) from Rattus norvegicus (Rat).